The following is a 42-amino-acid chain: F420-non-reducing hydrogenase vhu subunit U (42 aa).

Positions 21 and 24 each coordinate Ni(2+). A non-standard amino acid (selenocysteine) is located at residue U21. Positions 28 to 42 are cleaved as a propeptide — removed in mature form; sequence VLDRVKFRIERKDED.

The protein belongs to the [NiFe]/[NiFeSe] hydrogenase large subunit family. In terms of assembly, the F420-non-reducing hydrogenase vhu is composed of four subunits; VhuA, VhuD, VhuG and VhuU. Requires Ni(2+) as cofactor.

The chain is F420-non-reducing hydrogenase vhu subunit U (vhuU) from Methanopyrus kandleri (strain AV19 / DSM 6324 / JCM 9639 / NBRC 100938).